A 394-amino-acid chain; its full sequence is RHOMBOID-like protein 4 (394 aa).

Residues 1–51 (MGEKDSETAPIWGKTRERERSNNNNIQPMDLESSSSVSGQQRSLTQSRSSY) form a disordered region. Polar residues predominate over residues 39 to 49 (GQQRSLTQSRS). 7 helical membrane passes run 64–84 (WFPW…VITM), 147–167 (WLHG…FIGI), 175–195 (FIRI…LSAL), 201–221 (ISVG…SEIF), 231–251 (VVTI…GVLP), 254–274 (DNFA…VLLI), and 300–320 (ILWT…LISL). Serine 206 (nucleophile) is an active-site residue. The Charge relay system role is filled by histidine 258.

This sequence belongs to the peptidase S54 family.

The protein resides in the membrane. It catalyses the reaction Cleaves type-1 transmembrane domains using a catalytic dyad composed of serine and histidine that are contributed by different transmembrane domains.. Its function is as follows. Probable rhomboid-type serine protease that catalyzes intramembrane proteolysis. The polypeptide is RHOMBOID-like protein 4 (Arabidopsis thaliana (Mouse-ear cress)).